The sequence spans 349 residues: Probable ethanolamine kinase A (349 aa).

Belongs to the choline/ethanolamine kinase family.

The protein resides in the cytoplasm. The enzyme catalyses ethanolamine + ATP = phosphoethanolamine + ADP + H(+). It participates in phospholipid metabolism; phosphatidylethanolamine biosynthesis; phosphatidylethanolamine from ethanolamine: step 1/3. Highly specific for ethanolamine phosphorylation. May be a rate-controlling step in phosphatidylethanolamine biosynthesis. The sequence is that of Probable ethanolamine kinase A (etnkA) from Dictyostelium discoideum (Social amoeba).